Here is a 467-residue protein sequence, read N- to C-terminus: Uronate isomerase (467 aa).

This sequence belongs to the metallo-dependent hydrolases superfamily. Uronate isomerase family.

It catalyses the reaction D-glucuronate = D-fructuronate. It carries out the reaction aldehydo-D-galacturonate = keto-D-tagaturonate. The protein operates within carbohydrate metabolism; pentose and glucuronate interconversion. The chain is Uronate isomerase from Solibacter usitatus (strain Ellin6076).